A 190-amino-acid chain; its full sequence is Elongation factor P-like protein (190 aa).

It belongs to the elongation factor P family.

This Salmonella gallinarum (strain 287/91 / NCTC 13346) protein is Elongation factor P-like protein.